Reading from the N-terminus, the 656-residue chain is Leucine-rich repeat-containing protein 43 (656 aa).

A compositionally biased stretch (acidic residues) spans 1–13; the sequence is MEASYESESESES. The interval 1–25 is disordered; that stretch reads MEASYESESESESEAGPGTQRPGTG. LRR repeat units follow at residues 150 to 170, 172 to 193, 196 to 215, and 223 to 244; these read KLEELVLSANRIKEVDATNLP, TLKVLELYGNEISSMECLCAHP, GLQHLGLGHNKLLGPLESLY, and NLVSLDLGFNDLTDLQSMVTSL. One can recognise an LRRCT domain in the interval 258-296; the sequence is NPLALVPYYRGLTIDSLAQLCVLDDITVSPNEKHLFRGL. The segment at 512–554 is disordered; it reads LSAKKGKGEKDKKGKEKDRTGKGEKEPAKEWKVLKKKKEPPKE. Residues 517–544 are compositionally biased toward basic and acidic residues; sequence GKGEKDKKGKEKDRTGKGEKEPAKEWKV.

This is Leucine-rich repeat-containing protein 43 (LRRC43) from Homo sapiens (Human).